The sequence spans 182 residues: Ribosome maturation factor RimM (182 aa).

The PRC barrel domain occupies 101–182; it reads VDEYYWSDLK…RIYVNWGVDY (82 aa).

This sequence belongs to the RimM family. In terms of assembly, binds ribosomal protein uS19.

It localises to the cytoplasm. Functionally, an accessory protein needed during the final step in the assembly of 30S ribosomal subunit, possibly for assembly of the head region. Essential for efficient processing of 16S rRNA. May be needed both before and after RbfA during the maturation of 16S rRNA. It has affinity for free ribosomal 30S subunits but not for 70S ribosomes. This is Ribosome maturation factor RimM from Acinetobacter baylyi (strain ATCC 33305 / BD413 / ADP1).